We begin with the raw amino-acid sequence, 331 residues long: Hydroxyacylglutathione hydrolase 1, mitochondrial (331 aa).

Residues 1–76 constitute a mitochondrion transit peptide; it reads MPVISKASST…HFCSISNMPS (76 aa). Positions 131 and 133 each coordinate Zn(2+). Fe cation contacts are provided by aspartate 135 and histidine 136. Positions 189 and 208 each coordinate Zn(2+). A Fe cation-binding site is contributed by aspartate 208. Residue 246-248 coordinates substrate; sequence REN.

This sequence belongs to the metallo-beta-lactamase superfamily. Glyoxalase II family. Requires Fe(2+) as cofactor. Fe(3+) serves as cofactor. Zn(2+) is required as a cofactor. Mainly expressed in roots, flowers and flower buds. Also detected in leaves.

The protein localises to the mitochondrion. The catalysed reaction is an S-(2-hydroxyacyl)glutathione + H2O = a 2-hydroxy carboxylate + glutathione + H(+). Its pathway is secondary metabolite metabolism; methylglyoxal degradation; (R)-lactate from methylglyoxal: step 2/2. Its function is as follows. Thiolesterase that catalyzes the hydrolysis of S-D-lactoyl-glutathione to form glutathione and D-lactic acid. The polypeptide is Hydroxyacylglutathione hydrolase 1, mitochondrial (GLX2-1) (Arabidopsis thaliana (Mouse-ear cress)).